A 63-amino-acid chain; its full sequence is Large ribosomal subunit protein uL29 (63 aa).

Belongs to the universal ribosomal protein uL29 family.

In Caulobacter vibrioides (strain ATCC 19089 / CIP 103742 / CB 15) (Caulobacter crescentus), this protein is Large ribosomal subunit protein uL29.